A 390-amino-acid polypeptide reads, in one-letter code: MPLQDFLFTSESVTEGHPDKMADQISDAVLDAVLRQDPKGRVACETLLKTGYVMIAGEITTKARIDYPKLARETVRRIGYTSGDMGFDANTCAVLVAVDQQSPDIGQGVDTGGAGDQGMMFGYACDETPELMPAPIQYAHAVTKQLAKARRAGLDFLRPDGKSQVSVEYRDGRPVRIDTVVVSTQHAESVSNKRLHEAVREQVIAKALPKRLLDRKTRILINPTGRFVIGGPMGDTGVTGRKIIVDTYGGMGRHGGGAFSGKDPSKVDRSAAYMGRYIAKNVVAAGLASRCEVQVAYAIGVAEPVSVMVDTFGTAKVPEGKIARAVREVFGLTPRAIIEGLDLLRPVYEKTAAYGHFGRTEKTFTWERTDKKDALADAAGLSKIRAVASV.

Position 17 (His17) interacts with ATP. Asp19 contacts Mg(2+). Residue Glu45 participates in K(+) binding. L-methionine contacts are provided by Glu58 and Gln101. Residues 101–111 are flexible loop; that stretch reads QSPDIGQGVDT. ATP contacts are provided by residues 160–162, 226–227, Asp235, 241–242, Ala258, and Lys262; these read DGK, RF, and RK. L-methionine is bound at residue Asp235. Residue Lys266 participates in L-methionine binding.

This sequence belongs to the AdoMet synthase family. Homotetramer; dimer of dimers. Mg(2+) is required as a cofactor. It depends on K(+) as a cofactor.

It is found in the cytoplasm. It carries out the reaction L-methionine + ATP + H2O = S-adenosyl-L-methionine + phosphate + diphosphate. The protein operates within amino-acid biosynthesis; S-adenosyl-L-methionine biosynthesis; S-adenosyl-L-methionine from L-methionine: step 1/1. Catalyzes the formation of S-adenosylmethionine (AdoMet) from methionine and ATP. The overall synthetic reaction is composed of two sequential steps, AdoMet formation and the subsequent tripolyphosphate hydrolysis which occurs prior to release of AdoMet from the enzyme. The chain is S-adenosylmethionine synthase from Anaeromyxobacter dehalogenans (strain 2CP-1 / ATCC BAA-258).